The sequence spans 470 residues: Putative multidrug resistance protein MdtD (470 aa).

Topologically, residues 1–11 (MTELPDNTRWQ) are periplasmic. Residues 12–32 (LWIVAFGFFMQSLDTTIVNTA) traverse the membrane as a helical segment. The Cytoplasmic segment spans residues 33–48 (LPSMAKSLGESPLHMH). Residues 49–69 (MVVVSYVLTVAVMLPASGWLA) form a helical membrane-spanning segment. Topologically, residues 70 to 76 (DKIGVRN) are periplasmic. The helical transmembrane segment at 77–97 (IFFAAIVLFTLGSLFCALSGT) threads the bilayer. The Cytoplasmic segment spans residues 98 to 101 (LNQL). Residues 102–124 (VLARVLQGVGGAMMVPVGRLTVM) traverse the membrane as a helical segment. At 125 to 137 (KIVPRAQYMAAMT) the chain is on the periplasmic side. A helical transmembrane segment spans residues 138–158 (FVTLPGQIGPLLGPALGGVLV). Over 159-164 (EYASWH) the chain is Cytoplasmic. The helical transmembrane segment at 165–185 (WIFLINIPVGIVGAMATFMLM) threads the bilayer. Residues 186-196 (PNYTIETRRFD) lie on the Periplasmic side of the membrane. A helical membrane pass occupies residues 197–217 (LPGFLLLAIGMAVLTLALDGS). At 218–224 (KSMGISP) the chain is on the cytoplasmic side. A helical transmembrane segment spans residues 225–245 (WTLAGLAAGGAAAILLYLFHA). The Periplasmic segment spans residues 246–262 (KKSSGALFSLRLFRTPT). Residues 263–283 (FSLGLLGSFAGRIGSGMLPFM) form a helical membrane-spanning segment. Residues 284–285 (TP) are Cytoplasmic-facing. A helical membrane pass occupies residues 286–306 (VFLQIGLGFSPFHAGLMMIPM). The Periplasmic segment spans residues 307–341 (VLGSMGMKRIVVQIVNRFGYRRVLVATTLGLALVS). A helical transmembrane segment spans residues 342-362 (LLFMSVALLGWYYLLPLVLLL). Over 363-395 (QGMVNSARFSSMNTLTLKDLPDTLASSGNSLLS) the chain is Cytoplasmic. Residues 396–416 (MIMQLSMSIGVTIAGMLLGMF) form a helical membrane-spanning segment. Residues 417–430 (GQQHIGIDSSATHH) lie on the Periplasmic side of the membrane. A helical membrane pass occupies residues 431 to 451 (VFMYTWLCMAVIIALPAIIFA). The Cytoplasmic segment spans residues 452-470 (RVPNDTQQNMVISRRKRSL).

Belongs to the major facilitator superfamily. TCR/Tet family.

The protein resides in the cell inner membrane. The chain is Putative multidrug resistance protein MdtD from Salmonella paratyphi A (strain ATCC 9150 / SARB42).